The sequence spans 359 residues: Peptide methionine sulfoxide reductase MsrA/MsrB (359 aa).

Residues 36-189 (RVIYLAGGCF…PSGYCHIDLK (154 aa)) form a peptide methionine sulfoxide reductase A region. Cys-44 is a catalytic residue. One can recognise a MsrB domain in the interval 206–329 (DEVLKKKLTK…NSAALRFIPL (124 aa)). Cys-318 acts as the Nucleophile in catalysis.

It in the N-terminal section; belongs to the MsrA Met sulfoxide reductase family. This sequence in the C-terminal section; belongs to the MsrB Met sulfoxide reductase family.

It catalyses the reaction L-methionyl-[protein] + [thioredoxin]-disulfide + H2O = L-methionyl-(S)-S-oxide-[protein] + [thioredoxin]-dithiol. The enzyme catalyses [thioredoxin]-disulfide + L-methionine + H2O = L-methionine (S)-S-oxide + [thioredoxin]-dithiol. The catalysed reaction is L-methionyl-[protein] + [thioredoxin]-disulfide + H2O = L-methionyl-(R)-S-oxide-[protein] + [thioredoxin]-dithiol. In terms of biological role, has an important function as a repair enzyme for proteins that have been inactivated by oxidation. Catalyzes the reversible oxidation-reduction of methionine sulfoxide in proteins to methionine. This is Peptide methionine sulfoxide reductase MsrA/MsrB (msrAB) from Helicobacter pylori (strain ATCC 700392 / 26695) (Campylobacter pylori).